Consider the following 398-residue polypeptide: ATP-dependent RNA helicase eIF4A (398 aa).

The Q motif motif lies at 25–53 (DSFDSMDLKPELLRGVYAYGFERPSAIQQ). In terms of domain architecture, Helicase ATP-binding spans 56 to 226 (IKPIIAGHDV…TKFMRDPIRI (171 aa)). 69-76 (AQSGTGKT) is a binding site for ATP. The DEAD box signature appears at 174–177 (DEAD). Positions 237–398 (GIKQFYIAVE…EMPMNVADLI (162 aa)) constitute a Helicase C-terminal domain.

It belongs to the DEAD box helicase family. eIF4A subfamily. Component of the eIF4F complex, which composition varies with external and internal environmental conditions. It is composed of at least eIF4A, eIF4E and eIF4G.

Its subcellular location is the cytoplasm. It catalyses the reaction ATP + H2O = ADP + phosphate + H(+). Its function is as follows. ATP-dependent RNA helicase which is a subunit of the eIF4F complex involved in cap recognition and is required for mRNA binding to ribosome. In the current model of translation initiation, eIF4A unwinds RNA secondary structures in the 5'-UTR of mRNAs which is necessary to allow efficient binding of the small ribosomal subunit, and subsequent scanning for the initiator codon. This is ATP-dependent RNA helicase eIF4A (tif1) from Aspergillus niger (strain ATCC MYA-4892 / CBS 513.88 / FGSC A1513).